A 64-amino-acid polypeptide reads, in one-letter code: UPF0434 protein Bcep18194_A5877 (64 aa).

It belongs to the UPF0434 family.

This chain is UPF0434 protein Bcep18194_A5877, found in Burkholderia lata (strain ATCC 17760 / DSM 23089 / LMG 22485 / NCIMB 9086 / R18194 / 383).